We begin with the raw amino-acid sequence, 138 residues long: Small ribosomal subunit protein uS11c (138 aa).

The interval 1–24 (MAKAIPRSGSRRSGRIGSRKSTRR) is disordered. A compositionally biased stretch (basic residues) spans 9–24 (GSRRSGRIGSRKSTRR).

Belongs to the universal ribosomal protein uS11 family. Part of the 30S ribosomal subunit.

It is found in the plastid. The protein localises to the chloroplast. This chain is Small ribosomal subunit protein uS11c, found in Panax ginseng (Korean ginseng).